The sequence spans 529 residues: MDDEYMSLEEEEDNCYPSEFDDHDQMCSNAEESDLQHSREPTSQVITKEALVAAQKEVLVKVMEFLSVTENQARTLLIQYQWNVDKLFSVYTDQGKDVLFSRAGLTVFDPSLTKKTMKCDICMEEDLSKYAMTRMECGHRFCNDCWKEHFTVRINEGEGKRIRCMAYKCNTICDEARQLVSTELAEKFDRFLIESYVEDNNMVKWCPSTPHCGNAIRNIKDDGDVDEVECSCGLQFCFSCLSESHSPCSCLMWKLWKKKCEDESETVNWMTVNTKLCPKCSKPIQKRDGCNHMTCKCGQHFCWLCGQATGRDHSYSSIAGHSCGRYKEEKVRQLERAQRDLDRYTHYHYRYKAHIDSLKLEDKLKKSILKKAVLNSETKDQKVFKEYSWIIDAVNRLFRSRRILSYSYPFVFYMFGKELFKDDMSDEERNIKKNLFEDQQQQLEGNVERLSKILEEPFDEYDHEKVVEMMRHLTNLTAVVDNLCKEMYECIENELLGPLISGIHNIAPYRSKGIEQAAEFSASSACGSS.

The span at 1-22 (MDDEYMSLEEEEDNCYPSEFDD) shows a compositional bias: acidic residues. A disordered region spans residues 1 to 23 (MDDEYMSLEEEEDNCYPSEFDDH). Residues 115–327 (KTMKCDICME…IAGHSCGRYK (213 aa)) are TRIAD supradomain. Positions 119, 122, 137, 139, 142, 145, 164, 169, 206, 212, 230, 232, 237, 240, 245, 250, 277, and 280 each coordinate Zn(2+). The segment at 119 to 169 (CDICMEEDLSKYAMTRMECGHRFCNDCWKEHFTVRINEGEGKRIRCMAYKC) adopts an RING-type 1 zinc-finger fold. An IBR-type zinc finger spans residues 186–250 (EKFDRFLIES…LSESHSPCSC (65 aa)). The RING-type 2; atypical zinc-finger motif lies at 277–305 (CPKCSKPIQKRDGCNHMTCKCGQHFCWLC). Cys290 is an active-site residue. Zn(2+) contacts are provided by Cys295, Cys297, Cys302, Cys305, His313, and Cys323.

It belongs to the RBR family. Ariadne subfamily. Zn(2+) serves as cofactor.

It catalyses the reaction [E2 ubiquitin-conjugating enzyme]-S-ubiquitinyl-L-cysteine + [acceptor protein]-L-lysine = [E2 ubiquitin-conjugating enzyme]-L-cysteine + [acceptor protein]-N(6)-ubiquitinyl-L-lysine.. It functions in the pathway protein modification; protein ubiquitination. Its function is as follows. Might act as an E3 ubiquitin-protein ligase, or as part of E3 complex, which accepts ubiquitin from specific E2 ubiquitin-conjugating enzymes and then transfers it to substrates. The protein is Putative E3 ubiquitin-protein ligase ARI4 (ARI4) of Arabidopsis thaliana (Mouse-ear cress).